Consider the following 191-residue polypeptide: UPF0228 protein MM_1428 (191 aa).

This sequence belongs to the UPF0228 family.

The protein is UPF0228 protein MM_1428 of Methanosarcina mazei (strain ATCC BAA-159 / DSM 3647 / Goe1 / Go1 / JCM 11833 / OCM 88) (Methanosarcina frisia).